Reading from the N-terminus, the 112-residue chain is HTH-type transcriptional regulator YodB (112 aa).

The HTH hxlR-type domain maps to 6-105 (CPKMESAFSL…WADQFCEPGD (100 aa)).

In terms of biological role, negatively regulates yodC and azoR1 which may contribute to the degradation of aromatic compounds. Probably positively regulates the catechol-specific transcription of mhqNOP, mhqED, and mhqA. The polypeptide is HTH-type transcriptional regulator YodB (yodB) (Bacillus subtilis (strain 168)).